The primary structure comprises 151 residues: Probable cGMP 3',5'-cyclic phosphodiesterase subunit delta (151 aa).

It belongs to the PDE6D/unc-119 family. Interacts with Pde6.

Its subcellular location is the nucleus. It is found in the cytoplasm. The sequence is that of Probable cGMP 3',5'-cyclic phosphodiesterase subunit delta from Drosophila mojavensis (Fruit fly).